A 304-amino-acid polypeptide reads, in one-letter code: Non-specific ribonucleoside hydrolase RihC (304 aa).

His233 is a catalytic residue.

It belongs to the IUNH family. RihC subfamily.

Hydrolyzes both purine and pyrimidine ribonucleosides with a broad-substrate specificity. In Escherichia coli O139:H28 (strain E24377A / ETEC), this protein is Non-specific ribonucleoside hydrolase RihC.